We begin with the raw amino-acid sequence, 325 residues long: Lipoyl synthase (325 aa).

The segment at 1–32 (MPPLADASTETLSPAEQAAVRHPEKAHRPDQP) is disordered. Residues 19–32 (AVRHPEKAHRPDQP) show a composition bias toward basic and acidic residues. Residues Cys66, Cys71, Cys77, Cys92, Cys96, Cys99, and Ser305 each contribute to the [4Fe-4S] cluster site. The 217-residue stretch at 78-294 (WAKKHATFMI…AEVANAKGFL (217 aa)) folds into the Radical SAM core domain.

This sequence belongs to the radical SAM superfamily. Lipoyl synthase family. [4Fe-4S] cluster is required as a cofactor.

The protein resides in the cytoplasm. It carries out the reaction [[Fe-S] cluster scaffold protein carrying a second [4Fe-4S](2+) cluster] + N(6)-octanoyl-L-lysyl-[protein] + 2 oxidized [2Fe-2S]-[ferredoxin] + 2 S-adenosyl-L-methionine + 4 H(+) = [[Fe-S] cluster scaffold protein] + N(6)-[(R)-dihydrolipoyl]-L-lysyl-[protein] + 4 Fe(3+) + 2 hydrogen sulfide + 2 5'-deoxyadenosine + 2 L-methionine + 2 reduced [2Fe-2S]-[ferredoxin]. The protein operates within protein modification; protein lipoylation via endogenous pathway; protein N(6)-(lipoyl)lysine from octanoyl-[acyl-carrier-protein]: step 2/2. Catalyzes the radical-mediated insertion of two sulfur atoms into the C-6 and C-8 positions of the octanoyl moiety bound to the lipoyl domains of lipoate-dependent enzymes, thereby converting the octanoylated domains into lipoylated derivatives. The chain is Lipoyl synthase from Beijerinckia indica subsp. indica (strain ATCC 9039 / DSM 1715 / NCIMB 8712).